The sequence spans 860 residues: Endo-1,4-beta-xylanase B (860 aa).

The N-terminal stretch at 1–20 is a signal peptide; that stretch reads MKFSSANKILFSGLVASANA. The region spanning 21–324 is the GH10 domain; it reads YDLLKDYAGD…KPVYNTLLNI (304 aa). The Proton donor role is filled by Glu-144. Glu-255 (nucleophile) is an active-site residue. A disulfide bridge links Cys-278 with Cys-284. 4 N-linked (GlcNAc...) asparagine glycosylation sites follow: Asn-295, Asn-309, Asn-359, and Asn-374. Polar residues-rich tracts occupy residues 330–362 and 371–418; these read RPASSSAKTLPGNSKSKTLPGVNSKTLPGNKSK and LPGN…NSKT. The interval 330-793 is disordered; the sequence is RPASSSAKTL…TKTLPGGACK (464 aa). Repeat unit 1 spans residues 375–382; the sequence is KSKTLPGG. A 47 X 8 AA tandem repeats of [SKN]-S-K-T-L-P-G-G region spans residues 375 to 782; it reads KSKTLPGGNS…GGKSKTLPGG (408 aa). The N-linked (GlcNAc...) asparagine glycan is linked to Asn-390. Copy 2 of the repeat occupies 391–398; that stretch reads KSKTLPGG. An N-linked (GlcNAc...) asparagine glycan is attached at Asn-406. Tandem repeats lie at residues 415–422, 431–438, 439–446, 447–454, 455–462, 463–470, 471–478, 479–486, 487–494, 495–502, 503–510, 511–518, 519–526, 527–534, 535–542, 543–550, 551–558, 559–566, 567–574, 575–582, 583–590, 591–598, 599–606, 607–614, 615–622, 623–630, 631–638, 639–646, 647–654, 655–662, 663–670, 671–678, 679–686, 687–694, 695–702, 703–710, 711–718, 719–726, 727–734, 735–742, 743–750, 751–758, 759–766, 767–774, and 775–782. Polar residues-rich tracts occupy residues 461 to 474 and 485 to 498; these read GGNSKTLPGGSSKT. 4 stretches are compositionally biased toward polar residues: residues 525 to 546, 557 to 570, 581 to 594, and 605 to 618; these read GGNSKTLPGGNSKTLPGGSSKT, GGNSKTLPGGSSKT, and GGNSKTLPGGNSKT. Residues 645-666 show a composition bias toward polar residues; sequence GGNSKTLPGGNSKTLPGGSSKT. A compositionally biased stretch (polar residues) spans 741–754; sequence GGNSKTLPGGSSKT. In terms of domain architecture, CBM1 spans 824–860; sequence NCAAKWGQCGGNGFNGPTCCQNGSRCQFVNEWYSQCL. Asn-845 carries N-linked (GlcNAc...) asparagine glycosylation.

Belongs to the glycosyl hydrolase 10 (cellulase F) family.

It is found in the secreted. The catalysed reaction is Endohydrolysis of (1-&gt;4)-beta-D-xylosidic linkages in xylans.. It participates in glycan degradation; xylan degradation. Its function is as follows. Endo-1,4-beta-xylanase involved in the hydrolysis of xylan, a major structural heterogeneous polysaccharide found in plant biomass representing the second most abundant polysaccharide in the biosphere, after cellulose. Hydrolyzes both unsubstituted (oat spelts) and highly substituted (rye and wheat) forms of arabinoxylanslans. The chain is Endo-1,4-beta-xylanase B (xynB) from Neocallimastix patriciarum (Rumen fungus).